Consider the following 359-residue polypeptide: Peptide chain release factor 1 (359 aa).

At Q233 the chain carries N5-methylglutamine.

Belongs to the prokaryotic/mitochondrial release factor family. In terms of processing, methylated by PrmC. Methylation increases the termination efficiency of RF1.

Its subcellular location is the cytoplasm. Its function is as follows. Peptide chain release factor 1 directs the termination of translation in response to the peptide chain termination codons UAG and UAA. This Orientia tsutsugamushi (strain Ikeda) (Rickettsia tsutsugamushi) protein is Peptide chain release factor 1.